Here is a 202-residue protein sequence, read N- to C-terminus: Imidazole glycerol phosphate synthase subunit HisH 2 (202 aa).

Residues M1–A202 enclose the Glutamine amidotransferase type-1 domain. The active-site Nucleophile is the C80. Active-site residues include H183 and E185.

Heterodimer of HisH and HisF.

The protein localises to the cytoplasm. It catalyses the reaction 5-[(5-phospho-1-deoxy-D-ribulos-1-ylimino)methylamino]-1-(5-phospho-beta-D-ribosyl)imidazole-4-carboxamide + L-glutamine = D-erythro-1-(imidazol-4-yl)glycerol 3-phosphate + 5-amino-1-(5-phospho-beta-D-ribosyl)imidazole-4-carboxamide + L-glutamate + H(+). The catalysed reaction is L-glutamine + H2O = L-glutamate + NH4(+). The protein operates within amino-acid biosynthesis; L-histidine biosynthesis; L-histidine from 5-phospho-alpha-D-ribose 1-diphosphate: step 5/9. Functionally, IGPS catalyzes the conversion of PRFAR and glutamine to IGP, AICAR and glutamate. The HisH subunit provides the glutamine amidotransferase activity that produces the ammonia necessary to HisF for the synthesis of IGP and AICAR. The sequence is that of Imidazole glycerol phosphate synthase subunit HisH 2 (hisH2) from Methanococcus maripaludis (strain DSM 14266 / JCM 13030 / NBRC 101832 / S2 / LL).